Here is a 504-residue protein sequence, read N- to C-terminus: MSSSRNFDLEYDDYKERRNAAGMGSRASSRNGGRFKPIDKEKEKEKKEIGDYGLPKNEYKMQGYDERSSDVGADPLASVRTLRNNLRVMSLEHRDKDEPVKSHLCQSACDDLSKAEKQLVDLSHKRSDAVVRGDSRQAEQIAKDMDRVKSDAIRNAYSDLMMEDGTMKAFGVNSKWTPDKNPMPSDDWKPMTPMKPRKRAETPKGRKTESRQSNRGNNDNGDQRMTSKATTRSPERRVIPTEPSKPKTTRKNQRLSTIGHVPEAIPVVDTPLPGGSTVQDDPYKMPTYVGRCPHCQLTESGLGRAGGMEKHFAKYCKVMTSCKYCMKLTMVSQLTDHLIYRCEFLQDTMEACNDCGLAIEKEDQKRGGSHPMCRGRRPPTGAQWCPLCTIAVEDNEENWREHLLNNCYNNQRRDGPEKDPWEMKQEQEDILLGAKEKKKREMEEEERLKKEAEIRRQQQQVVVNNTGYPGKMIDADKLVVALQEIQERKKAEKKKKLKDIEKET.

Disordered stretches follow at residues 1-59 (MSSS…KNEY) and 171-255 (GVNS…NQRL). Composition is skewed to basic and acidic residues over residues 36–50 (KPID…KEIG) and 199–212 (RAET…ESRQ). Over residues 213–232 (SNRGNNDNGDQRMTSKATTR) the composition is skewed to polar residues.

This is an uncharacterized protein from Caenorhabditis elegans.